The sequence spans 625 residues: SWR1-complex protein 3 (625 aa).

4 disordered regions span residues 1-53 (MPAV…EVGN), 194-234 (KELK…KENK), 254-273 (KLKE…MHDP), and 324-434 (NPVN…NAIK). Positions 20–31 (SRTRTRSRRGKR) are enriched in basic residues. A compositionally biased stretch (acidic residues) spans 35–53 (DDDDDDDEESDDAYDEVGN). Composition is skewed to basic and acidic residues over residues 194-214 (KELK…ERKR) and 221-234 (IAKE…KENK). The span at 261-270 (NKQGSPSSSM) shows a compositional bias: polar residues. Positions 342-352 (KAKDVAEDHRL) are enriched in basic and acidic residues. Over residues 353-364 (NSITLVKSSKTA) the composition is skewed to polar residues. Composition is skewed to basic and acidic residues over residues 368-388 (PEPK…EAKT) and 396-420 (DVKK…KEDN).

The protein belongs to the SWC3 family. Component of the SWR1 chromatin remodeling complex composed of at least ACT1, ARP4, RVB1, RVB2, ARP6, YAF9, VPS71, VPS72, SWC3, SWC4, SWC5, SWC7 and SWR1, and perhaps BDF1.

Its subcellular location is the nucleus. Component of the SWR1 complex which mediates the ATP-dependent exchange of histone H2A for the H2A variant HZT1 leading to transcriptional regulation of selected genes by chromatin remodeling. Involved in chromosome stability. This chain is SWR1-complex protein 3 (SWC3), found in Saccharomyces cerevisiae (strain ATCC 204508 / S288c) (Baker's yeast).